The primary structure comprises 935 residues: Epstein-Barr nuclear antigen 3 (935 aa).

Disordered stretches follow at residues M1–G89, H342–G373, T399–P446, K611–P634, and H883–P908. Over residues A10–V19 the composition is skewed to acidic residues. The span at P20 to V29 shows a compositional bias: polar residues. Residues E352–L366 are compositionally biased toward acidic residues. Residues T399–R410 show a composition bias toward basic and acidic residues. Positions S431 to S440 are enriched in polar residues. The span at V615 to P630 shows a compositional bias: low complexity.

The protein belongs to the herpesviridae EBNA-3 family. As to quaternary structure, interacts with human UCKL1. Interacts with host CTPB1; this interaction seems important for EBNA3-mediated transcriptional repression. Interacts with host RBPJ. Interacts with host USP12 and WDR48; these interactions form a deubiquitination-competent complex.

It localises to the host nucleus matrix. Plays an essential role for activation and immortalization of human B-cells. Represses transcription of viral promoters TP1 and Cp through interaction with host RBPJ, and inhibits EBNA2-mediated activation of these promoters. Since Cp is the promoter for all EBNA mRNAs, EBNA3A probably contributes to a negative autoregulatory control loop. The polypeptide is Epstein-Barr nuclear antigen 3 (EBNA3) (Homo sapiens (Human)).